The following is a 114-amino-acid chain: Hydrogenase maturation factor HypA (114 aa).

Histidine 2 contributes to the Ni(2+) binding site. 4 residues coordinate Zn(2+): cysteine 73, cysteine 76, cysteine 89, and cysteine 92.

This sequence belongs to the HypA/HybF family.

Involved in the maturation of [NiFe] hydrogenases. Required for nickel insertion into the metal center of the hydrogenase. This chain is Hydrogenase maturation factor HypA, found in Syntrophus aciditrophicus (strain SB).